The following is a 228-amino-acid chain: Octanoyltransferase (228 aa).

The BPL/LPL catalytic domain maps to 37–217; the sequence is AGGPDTLLLL…AVCDALDGRL (181 aa). Substrate contacts are provided by residues 75 to 82, 147 to 149, and 160 to 162; these read RGGKITWH, AIG, and GFA. C178 functions as the Acyl-thioester intermediate in the catalytic mechanism.

This sequence belongs to the LipB family.

Its subcellular location is the cytoplasm. The enzyme catalyses octanoyl-[ACP] + L-lysyl-[protein] = N(6)-octanoyl-L-lysyl-[protein] + holo-[ACP] + H(+). The protein operates within protein modification; protein lipoylation via endogenous pathway; protein N(6)-(lipoyl)lysine from octanoyl-[acyl-carrier-protein]: step 1/2. Functionally, catalyzes the transfer of endogenously produced octanoic acid from octanoyl-acyl-carrier-protein onto the lipoyl domains of lipoate-dependent enzymes. Lipoyl-ACP can also act as a substrate although octanoyl-ACP is likely to be the physiological substrate. The protein is Octanoyltransferase of Mycolicibacterium smegmatis (strain ATCC 700084 / mc(2)155) (Mycobacterium smegmatis).